The chain runs to 305 residues: Membrane glycoprotein UL142 (305 aa).

An N-terminal signal peptide occupies residues 1 to 19; that stretch reads MRIEWACWLFGYFVSSVGS. Topologically, residues 20 to 270 are lumenal; that stretch reads ERSLSYRYHL…QKTNNTTSPW (251 aa). The chain crosses the membrane as a helical span at residues 271-288; it reads VYAIPMGATATIGAGLYI. Topologically, residues 289 to 305 are cytoplasmic; that stretch reads GKHFTPVKFVYEVWRGQ.

Interacts with host MICA and ULBP3.

The protein resides in the host endoplasmic reticulum membrane. It is found in the host Golgi apparatus membrane. In terms of biological role, participates in the inhibition of the host immune response. Prevents host NK cell-mediated lysis of the infected cell by preventing the KLRK1 ligand 3/ULBP3 trafficking to the cell surface. Also retains another KLRK1 ligand, MHC class I-related chain A/MICA, in the Golgi apparatus to avoid its surface expression. This chain is Membrane glycoprotein UL142 (UL142), found in Homo sapiens (Human).